Consider the following 926-residue polypeptide: Isoleucine--tRNA ligase (926 aa).

The 'HIGH' region motif lies at 57–67; it reads PYANGNIHMGH. Residue E555 participates in L-isoleucyl-5'-AMP binding. Positions 596 to 600 match the 'KMSKS' region motif; sequence KMSKS. Residue K599 participates in ATP binding. 4 residues coordinate Zn(2+): C897, C900, C914, and C917.

It belongs to the class-I aminoacyl-tRNA synthetase family. IleS type 1 subfamily. In terms of assembly, monomer. It depends on Zn(2+) as a cofactor.

It is found in the cytoplasm. The catalysed reaction is tRNA(Ile) + L-isoleucine + ATP = L-isoleucyl-tRNA(Ile) + AMP + diphosphate. Catalyzes the attachment of isoleucine to tRNA(Ile). As IleRS can inadvertently accommodate and process structurally similar amino acids such as valine, to avoid such errors it has two additional distinct tRNA(Ile)-dependent editing activities. One activity is designated as 'pretransfer' editing and involves the hydrolysis of activated Val-AMP. The other activity is designated 'posttransfer' editing and involves deacylation of mischarged Val-tRNA(Ile). This is Isoleucine--tRNA ligase from Natranaerobius thermophilus (strain ATCC BAA-1301 / DSM 18059 / JW/NM-WN-LF).